The following is a 200-amino-acid chain: RPW8-like protein 4 (200 aa).

Residues 1–157 (MPIAELAVIK…MKAIQVDQWT (157 aa)) form the RPW8 domain. A helical membrane pass occupies residues 7-29 (AVIKTVGGPLIAAALGVGAQVIY). A coiled-coil region spans residues 70–127 (REVHESLTRLLEDAKSIIEKYWKLRWSRHVCRKYRYIKKLESIELELVRVAREIQVHQ).

This sequence belongs to the plant RPW8 protein family.

Its subcellular location is the membrane. Its function is as follows. Probable disease resistance (R) protein. This Arabidopsis thaliana (Mouse-ear cress) protein is RPW8-like protein 4 (HR4).